Reading from the N-terminus, the 48-residue chain is Large ribosomal subunit protein bL32c (48 aa).

The protein belongs to the bacterial ribosomal protein bL32 family.

The protein resides in the plastid. Its subcellular location is the chloroplast. The polypeptide is Large ribosomal subunit protein bL32c (rpl32) (Vicia faba (Broad bean)).